The chain runs to 400 residues: 2-[(L-alanin-3-ylcarbamoyl)methyl]-2-hydroxybutanedioate decarboxylase (400 aa).

K50 bears the N6-(pyridoxal phosphate)lysine mark. Pyridoxal 5'-phosphate is bound by residues G228 and 266–269 (ECGR). C344 serves as the catalytic Proton donor. Y373 provides a ligand contact to pyridoxal 5'-phosphate.

It belongs to the Orn/Lys/Arg decarboxylase class-II family. As to quaternary structure, homodimer. Requires pyridoxal 5'-phosphate as cofactor.

It catalyses the reaction 2-[(L-alanin-3-ylcarbamoyl)methyl]-2-hydroxybutanedioate + H(+) = 2-[(2-aminoethylcarbamoyl)methyl]-2-hydroxybutanedioate + CO2. It functions in the pathway siderophore biosynthesis. Catalyzes the decarboxylation of citryl-L-2,3-diaminopropionic acid to citryl-diaminoethane, the second step in staphyloferrin B biosynthesis. The chain is 2-[(L-alanin-3-ylcarbamoyl)methyl]-2-hydroxybutanedioate decarboxylase from Staphylococcus aureus (strain NCTC 8325 / PS 47).